The sequence spans 703 residues: tRNA 5-methylaminomethyl-2-thiouridine biosynthesis bifunctional protein MnmC (703 aa).

The tRNA (mnm(5)s(2)U34)-methyltransferase stretch occupies residues 1–281; the sequence is MTAKPQKSCQ…KPAALVAKDH (281 aa). The FAD-dependent cmnm(5)s(2)U34 oxidoreductase stretch occupies residues 286-703; sequence VGGGLASANL…LRKLLKGKAL (418 aa).

It in the N-terminal section; belongs to the methyltransferase superfamily. tRNA (mnm(5)s(2)U34)-methyltransferase family. In the C-terminal section; belongs to the DAO family. It depends on FAD as a cofactor.

Its subcellular location is the cytoplasm. The catalysed reaction is 5-aminomethyl-2-thiouridine(34) in tRNA + S-adenosyl-L-methionine = 5-methylaminomethyl-2-thiouridine(34) in tRNA + S-adenosyl-L-homocysteine + H(+). Functionally, catalyzes the last two steps in the biosynthesis of 5-methylaminomethyl-2-thiouridine (mnm(5)s(2)U) at the wobble position (U34) in tRNA. Catalyzes the FAD-dependent demodification of cmnm(5)s(2)U34 to nm(5)s(2)U34, followed by the transfer of a methyl group from S-adenosyl-L-methionine to nm(5)s(2)U34, to form mnm(5)s(2)U34. In Shewanella sp. (strain MR-7), this protein is tRNA 5-methylaminomethyl-2-thiouridine biosynthesis bifunctional protein MnmC.